The sequence spans 351 residues: Peptide chain release factor 1 (351 aa).

Q229 carries the N5-methylglutamine modification.

The protein belongs to the prokaryotic/mitochondrial release factor family. Post-translationally, methylated by PrmC. Methylation increases the termination efficiency of RF1.

It localises to the cytoplasm. Functionally, peptide chain release factor 1 directs the termination of translation in response to the peptide chain termination codons UAG and UAA. The polypeptide is Peptide chain release factor 1 (Cereibacter sphaeroides (strain ATCC 17025 / ATH 2.4.3) (Rhodobacter sphaeroides)).